We begin with the raw amino-acid sequence, 1843 residues long: Protein TIC 214 (1843 aa).

6 helical membrane-spanning segments follow: residues 18–38 (IINSVVVVGLYYGFLTTFSIG), 64–84 (FITGQLMMFISIYYAPLHLAL), 87–107 (PHTITVLVLPYLLFHFFWNNH), 124–144 (LSIQCVFLNNLIFQLFNHFIL), 172–192 (VGWLIGHILFMKWVGLVLFWI), and 217–237 (IFSILLFITCVYYLGRIPSPI). Disordered regions lie at residues 244–281 (ETSKTEEREESEEETDVEIETTSETKGTKQEQEGAAEK), 557–576 (EEIENDEESKPDHGIRSRKA), 582–647 (FTDN…DEVA), 724–744 (NSEEEDTKEKEKKREEKRQEN), and 1527–1586 (SLEL…KKKK). Positions 251–264 (REESEEETDVEIET) are enriched in acidic residues. Residues 269-281 (KGTKQEQEGAAEK) are compositionally biased toward basic and acidic residues. Residues 590 to 639 (NTPTSTTETTSTAETTSTTETTSTTKNTSTTKNTSTTETTSTTENENTSN) show a composition bias toward low complexity. 2 stretches are compositionally biased toward basic and acidic residues: residues 730–744 (TKEKEKKREEKRQEN) and 1527–1540 (SLELKNKEEKKKPA). Polar residues predominate over residues 1543 to 1562 (NIGSDTQKQGNPGSDPSTQQ). A compositionally biased stretch (basic and acidic residues) spans 1563 to 1580 (KDIKKNVKEDYDGRSDIQ).

The protein belongs to the TIC214 family. In terms of assembly, part of the Tic complex.

Its subcellular location is the plastid. It is found in the chloroplast inner membrane. In terms of biological role, involved in protein precursor import into chloroplasts. May be part of an intermediate translocation complex acting as a protein-conducting channel at the inner envelope. The chain is Protein TIC 214 from Nandina domestica (Heavenly bamboo).